A 57-amino-acid polypeptide reads, in one-letter code: Large ribosomal subunit protein bL32c (57 aa).

This sequence belongs to the bacterial ribosomal protein bL32 family.

The protein localises to the plastid. Its subcellular location is the chloroplast. The polypeptide is Large ribosomal subunit protein bL32c (Vitis vinifera (Grape)).